Here is a 421-residue protein sequence, read N- to C-terminus: Histidine--tRNA ligase (421 aa).

It belongs to the class-II aminoacyl-tRNA synthetase family. Homodimer.

It localises to the cytoplasm. It carries out the reaction tRNA(His) + L-histidine + ATP = L-histidyl-tRNA(His) + AMP + diphosphate + H(+). The chain is Histidine--tRNA ligase from Francisella tularensis subsp. mediasiatica (strain FSC147).